Reading from the N-terminus, the 631-residue chain is MLYHEKFDVIVVGGGHAGTEAALASARTGQSTLLLTHNIDTLGQMSCNPAIGGIGKGHLVKEVDAMGGLMAQAIDHAGIQFRTLNASKGPAVRATRAQADRALYKAFVRNVLENTPNLTLFQQSVDDLIVEQDQVVGVVTQMGLKFRANAVVLTVGTFLGGKIHIGMESSSGGRAGDPPSIALADRLRDLPFRVDRLKTGTPPRIDARSVDFSELEVQHGDNPTPVFSFMGNRAQQPRQIPCYITHTNENTHDVIRANLDRSPMYAGVIEGIGPRYCPSIEDKVMRFADKNSHQIFIEPEGLTTHELYPNGISTSLPFDVQVKIVHSMKGFENAHIVRPGYAIEYDFFDPRDLKLTYETKFIKGLFFAGQINGTTGYEEAAAQGLMAGLNASLFTQGKEGWSPRRDQAYMGVLIDDLSTMGTKEPYRMFTSRAEYRLLLREDNADIRLTEKSRELGLVDDARWTRFNEKMENMEKERQRLKETWINPKSEDIDQLNQILKTPMSREASGEDLLRRPEMTYSQLTSLDRFGPALEDQQASEQVEIQVKYDGYIQRQQDEIEKSLRHENTKLPADIDYSKVKGLSNEVVLKLTTAKPDSIGIASRISGITPAAISILLVYLKKHGLLKKGEEA.

Residues 13 to 18 (GGGHAG), Val-125, and Ser-180 contribute to the FAD site. NAD(+) is bound at residue 273–287 (GPRYCPSIEDKVMRF). Gln-370 is an FAD binding site.

This sequence belongs to the MnmG family. In terms of assembly, homodimer. Heterotetramer of two MnmE and two MnmG subunits. It depends on FAD as a cofactor.

The protein localises to the cytoplasm. NAD-binding protein involved in the addition of a carboxymethylaminomethyl (cmnm) group at the wobble position (U34) of certain tRNAs, forming tRNA-cmnm(5)s(2)U34. The polypeptide is tRNA uridine 5-carboxymethylaminomethyl modification enzyme MnmG (Vibrio atlanticus (strain LGP32) (Vibrio splendidus (strain Mel32))).